The primary structure comprises 65 residues: Large ribosomal subunit protein uL29 (65 aa).

The protein belongs to the universal ribosomal protein uL29 family.

In Bacteroides fragilis (strain ATCC 25285 / DSM 2151 / CCUG 4856 / JCM 11019 / LMG 10263 / NCTC 9343 / Onslow / VPI 2553 / EN-2), this protein is Large ribosomal subunit protein uL29.